A 79-amino-acid chain; its full sequence is Ribonuclease P protein component 1 (79 aa).

This sequence belongs to the eukaryotic/archaeal RNase P protein component 1 family. In terms of assembly, consists of a catalytic RNA component and at least 4-5 protein subunits.

Its subcellular location is the cytoplasm. It carries out the reaction Endonucleolytic cleavage of RNA, removing 5'-extranucleotides from tRNA precursor.. Functionally, part of ribonuclease P, a protein complex that generates mature tRNA molecules by cleaving their 5'-ends. This chain is Ribonuclease P protein component 1, found in Saccharolobus solfataricus (strain ATCC 35092 / DSM 1617 / JCM 11322 / P2) (Sulfolobus solfataricus).